Here is a 620-residue protein sequence, read N- to C-terminus: LEAF RUST 10 DISEASE-RESISTANCE LOCUS RECEPTOR-LIKE PROTEIN KINASE-like 2.3 (620 aa).

Residues 1 to 30 form the signal peptide; it reads MDSLSSMGFQTASFFLILLFLFYHLPCVPS. Over 31-256 the chain is Extracellular; sequence QQERSRLCKP…NNGTYSDNRP (226 aa). N-linked (GlcNAc...) asparagine glycosylation is found at asparagine 75, asparagine 85, asparagine 93, asparagine 132, asparagine 148, asparagine 162, asparagine 189, asparagine 231, and asparagine 248. Residues 257–277 form a helical membrane-spanning segment; that stretch reads FLVTIGTVLGSILCVCVVLFL. Over 278 to 620 the chain is Cytoplasmic; that stretch reads AFYLNERRIA…SVESSIYSEV (343 aa). A Protein kinase domain is found at 314–596; the sequence is KSFTEVVGRG…SLDPPPKPLL (283 aa). Residues 320-328 and lysine 342 each bind ATP; that span reads VGRGGFGTV. Catalysis depends on aspartate 431, which acts as the Proton acceptor. The segment at 586–620 is disordered; sequence DSLDPPPKPLLHMPMQNNNAESSQLSVESSIYSEV. The segment covering 600 to 620 has biased composition (polar residues); that stretch reads MQNNNAESSQLSVESSIYSEV.

Belongs to the protein kinase superfamily. Ser/Thr protein kinase family.

It is found in the membrane. The enzyme catalyses L-seryl-[protein] + ATP = O-phospho-L-seryl-[protein] + ADP + H(+). It carries out the reaction L-threonyl-[protein] + ATP = O-phospho-L-threonyl-[protein] + ADP + H(+). This chain is LEAF RUST 10 DISEASE-RESISTANCE LOCUS RECEPTOR-LIKE PROTEIN KINASE-like 2.3, found in Arabidopsis thaliana (Mouse-ear cress).